Consider the following 268-residue polypeptide: Cell division cycle-associated protein 3 (268 aa).

Disordered regions lie at residues 1–232 and 247–268; these read MGSA…SELK and GRAW…LVES. Phosphoserine is present on residues Ser-29 and Ser-31. Thr-37 bears the Phosphothreonine mark. A phosphoserine mark is found at Ser-44, Ser-64, and Ser-68. Residues 56–66 show a composition bias toward basic and acidic residues; sequence EGLKHAQDSDP. Thr-76 carries the phosphothreonine modification. Phosphoserine is present on residues Ser-87 and Ser-94. The tract at residues 91–120 is F-box-like; the sequence is KQLSEVFETEDSKSNLPPEPVLPPEAPLSS. Over residues 107–116 the composition is skewed to pro residues; it reads PPEPVLPPEA. Residues 117–126 are compositionally biased toward low complexity; it reads PLSSELDLPL. Composition is skewed to polar residues over residues 128–149, 158–169, and 178–194; these read TQLS…SKQV, PTETPVASQSSD, and PRSS…NSSK. The residue at position 199 (Ser-199) is a Phosphoserine. Thr-202 carries the phosphothreonine modification. A compositionally biased stretch (polar residues) spans 205-215; the sequence is QDDNSPGTLTL. Ser-209 is subject to Phosphoserine. A Phosphothreonine modification is found at Thr-212. Residues 258–260 carry the KEN box motif; that stretch reads KEN.

As to quaternary structure, interacts with SKP1. Part of a SCF (SKP1-cullin-F-box) protein ligase complex. Ubiquitinated and degraded by the APC/C-Cdh1 complex.

It localises to the cytoplasm. The protein localises to the cytosol. It participates in protein modification; protein ubiquitination. Its function is as follows. F-box-like protein which is required for entry into mitosis. Acts by participating in E3 ligase complexes that mediate the ubiquitination and degradation of WEE1 kinase at G2/M phase. The protein is Cell division cycle-associated protein 3 (CDCA3) of Homo sapiens (Human).